A 161-amino-acid polypeptide reads, in one-letter code: Large ribosomal subunit protein uL15 (161 aa).

Basic and acidic residues predominate over residues 1 to 10 (MKLNELRDNP). The segment at 1–42 (MKLNELRDNPGARPKSKRLGRGIGSGKGKTSGKGVKGQKARE) is disordered. A compositionally biased stretch (gly residues) spans 21–35 (RGIGSGKGKTSGKGV).

The protein belongs to the universal ribosomal protein uL15 family. In terms of assembly, part of the 50S ribosomal subunit.

Its function is as follows. Binds to the 23S rRNA. In Acidiphilium cryptum (strain JF-5), this protein is Large ribosomal subunit protein uL15.